The sequence spans 607 residues: UvrABC system protein C (607 aa).

Residues 16–94 (GRPGVYRMFD…IKEWRPPYNI (79 aa)) form the GIY-YIG domain. A UVR domain is found at 203-238 (NALSDELNATMEKAAMALDFERAAELRDQVALLRRV).

This sequence belongs to the UvrC family. Interacts with UvrB in an incision complex.

The protein localises to the cytoplasm. The UvrABC repair system catalyzes the recognition and processing of DNA lesions. UvrC both incises the 5' and 3' sides of the lesion. The N-terminal half is responsible for the 3' incision and the C-terminal half is responsible for the 5' incision. The protein is UvrABC system protein C of Pseudomonas savastanoi pv. phaseolicola (strain 1448A / Race 6) (Pseudomonas syringae pv. phaseolicola (strain 1448A / Race 6)).